Reading from the N-terminus, the 434-residue chain is Lecithin-cholesterol acyltransferase-like 1 (434 aa).

Residue Ser191 is the Acyl-ester intermediate of the active site. Catalysis depends on charge relay system residues Asp354 and His386.

The protein belongs to the AB hydrolase superfamily. Lipase family.

This is Lecithin-cholesterol acyltransferase-like 1 from Oryza sativa subsp. japonica (Rice).